We begin with the raw amino-acid sequence, 502 residues long: Mannitol 2-dehydrogenase (502 aa).

37–48 (IVHIGVGGFHRA) provides a ligand contact to NAD(+).

It belongs to the mannitol dehydrogenase family. Monomer.

The enzyme catalyses D-mannitol + NAD(+) = D-fructose + NADH + H(+). Catalyzes the NAD(H)-dependent interconversion of D-fructose and D-mannitol in the mannitol metabolic pathway. The chain is Mannitol 2-dehydrogenase from Neosartorya fischeri (strain ATCC 1020 / DSM 3700 / CBS 544.65 / FGSC A1164 / JCM 1740 / NRRL 181 / WB 181) (Aspergillus fischerianus).